Reading from the N-terminus, the 256-residue chain is MAVGKNKRLSKGKKGLKKKAQDPFARKDWYGIKAPAPFAIRDVGKTLVNRTTGLKNANDALKGRIVEVSLADLQKDEDHAFRKVKLRVDEVQGKNCLTNFHGLDFTSDKLRSLVRKWQTLIEANVTVQTTDHYLLRLFAIAFTKRRPNQIKKTTYAASSQIRAIRKKMTEIIQREASSCTLQQLTSKLIPEVIGREIEKATQGIYPLQNVHIRKVKLLKAPKFDLGALMALHGESSTDDAGQKVEREFKETVLESV.

Residues 1–18 (MAVGKNKRLSKGKKGLKK) are compositionally biased toward basic residues. The disordered stretch occupies residues 1–20 (MAVGKNKRLSKGKKGLKKKA). Ala-2 is subject to N-acetylalanine; partial.

The protein belongs to the eukaryotic ribosomal protein eS1 family. Component of the small ribosomal subunit. Mature ribosomes consist of a small (40S) and a large (60S) subunit. The 40S subunit contains about 33 different proteins and 1 molecule of RNA (18S). The 60S subunit contains about 49 different proteins and 3 molecules of RNA (25S, 5.8S and 5S).

The protein resides in the cytoplasm. The protein is Small ribosomal subunit protein eS1 of Podospora anserina (strain S / ATCC MYA-4624 / DSM 980 / FGSC 10383) (Pleurage anserina).